A 367-amino-acid chain; its full sequence is Anhydro-N-acetylmuramic acid kinase (367 aa).

11–18 lines the ATP pocket; that stretch reads GTSLDGVD.

The protein belongs to the anhydro-N-acetylmuramic acid kinase family.

It carries out the reaction 1,6-anhydro-N-acetyl-beta-muramate + ATP + H2O = N-acetyl-D-muramate 6-phosphate + ADP + H(+). It functions in the pathway amino-sugar metabolism; 1,6-anhydro-N-acetylmuramate degradation. The protein operates within cell wall biogenesis; peptidoglycan recycling. In terms of biological role, catalyzes the specific phosphorylation of 1,6-anhydro-N-acetylmuramic acid (anhMurNAc) with the simultaneous cleavage of the 1,6-anhydro ring, generating MurNAc-6-P. Is required for the utilization of anhMurNAc either imported from the medium or derived from its own cell wall murein, and thus plays a role in cell wall recycling. This Rhodopseudomonas palustris (strain HaA2) protein is Anhydro-N-acetylmuramic acid kinase.